The primary structure comprises 341 residues: HTH-type transcriptional repressor PurR (341 aa).

In terms of domain architecture, HTH lacI-type spans 2 to 56 (ATIKDVAKRANVSTTTVSHVINKTRFVAEETRNAVWAAIKELHYSPSAVARSLKV). Positions 4–23 (IKDVAKRANVSTTTVSHVIN) form a DNA-binding region, H-T-H motif. The DNA-binding element occupies 48–56 (SAVARSLKV). Hypoxanthine contacts are provided by Tyr73, Arg190, Thr192, Phe221, and Asp275.

As to quaternary structure, homodimer.

The protein operates within purine metabolism; purine nucleotide biosynthesis [regulation]. Its function is as follows. Is the main repressor of the genes involved in the de novo synthesis of purine nucleotides, regulating purB, purC, purEK, purF, purHD, purL, purMN and guaBA expression. PurR is allosterically activated to bind its cognate DNA by binding the purine corepressors, hypoxanthine or guanine, thereby effecting transcription repression. In Escherichia coli (strain UTI89 / UPEC), this protein is HTH-type transcriptional repressor PurR.